A 348-amino-acid polypeptide reads, in one-letter code: Competence protein ComGA (348 aa).

145–152 (GATGSGKT) is an ATP binding site.

Belongs to the GSP E family.

The protein resides in the cell membrane. Functionally, required for uptake of DNA by competent cells. The protein is Competence protein ComGA (comGA) of Halalkalibacterium halodurans (strain ATCC BAA-125 / DSM 18197 / FERM 7344 / JCM 9153 / C-125) (Bacillus halodurans).